Here is a 404-residue protein sequence, read N- to C-terminus: Cytoplasmic tRNA 2-thiolation protein 2 (404 aa).

The protein belongs to the CTU2/NCS2 family.

It localises to the cytoplasm. Its pathway is tRNA modification; 5-methoxycarbonylmethyl-2-thiouridine-tRNA biosynthesis. Its function is as follows. Plays a central role in 2-thiolation of mcm(5)S(2)U at tRNA wobble positions of tRNA(Lys), tRNA(Glu) and tRNA(Gln). May act by forming a heterodimer with NCS6/CTU1 that ligates sulfur from thiocarboxylated URM1 onto the uridine of tRNAs at wobble position. The sequence is that of Cytoplasmic tRNA 2-thiolation protein 2 from Drosophila mojavensis (Fruit fly).